We begin with the raw amino-acid sequence, 174 residues long: Type II restriction enzyme Bsp6I (174 aa).

The catalysed reaction is Endonucleolytic cleavage of DNA to give specific double-stranded fragments with terminal 5'-phosphates.. Its function is as follows. A P subtype restriction enzyme that recognizes the double-stranded sequence 5'-GCNGC-3' and cleaves after C-2. This Bacillus sp. (strain RFL6) protein is Type II restriction enzyme Bsp6I.